Consider the following 1201-residue polypeptide: ATPase with bromodomain protein abo2 (1201 aa).

2 disordered regions span residues 1–223 (MRRR…MRGP) and 305–324 (CDSD…TSDV). Over residues 13-24 (DDNEDNEEDDDY) the composition is skewed to acidic residues. The span at 29 to 38 (HSEKSEDHSN) shows a compositional bias: basic and acidic residues. Residues 66-89 (FSSLQKHLNTETPSFSVSIENPSK) show a composition bias toward polar residues. Acidic residues predominate over residues 129 to 146 (TDNNEDESTTFKDEEDDL). A compositionally biased stretch (basic residues) spans 212–221 (RRGRRKRKMR). The segment covering 312 to 323 (ELSSTSSEQTSD) has biased composition (low complexity). An ATP-binding site is contributed by 413–420 (GPPGTGKT). In terms of domain architecture, Bromo spans 897–1026 (KIKNKIQVKL…AHAELNVDEL (130 aa)).

Belongs to the AAA ATPase family.

It localises to the nucleus. The enzyme catalyses ATP + H2O = ADP + phosphate + H(+). Probable ATPase which may play a role in nucleosome organization. The protein is ATPase with bromodomain protein abo2 of Schizosaccharomyces pombe (strain 972 / ATCC 24843) (Fission yeast).